The primary structure comprises 308 residues: Ribosomal RNA small subunit methyltransferase H (308 aa).

Residues 46–48 (AGH), aspartate 63, tyrosine 87, aspartate 108, and glutamine 115 contribute to the S-adenosyl-L-methionine site. The segment at 269 to 308 (TKRPVEASEEERGRNPRARSAKLRAAEKVAAPEGLPEVEV) is disordered. Basic and acidic residues predominate over residues 271-282 (RPVEASEEERGR).

The protein belongs to the methyltransferase superfamily. RsmH family.

Its subcellular location is the cytoplasm. It carries out the reaction cytidine(1402) in 16S rRNA + S-adenosyl-L-methionine = N(4)-methylcytidine(1402) in 16S rRNA + S-adenosyl-L-homocysteine + H(+). In terms of biological role, specifically methylates the N4 position of cytidine in position 1402 (C1402) of 16S rRNA. This chain is Ribosomal RNA small subunit methyltransferase H, found in Deinococcus geothermalis (strain DSM 11300 / CIP 105573 / AG-3a).